A 323-amino-acid polypeptide reads, in one-letter code: Formyl peptide receptor-related sequence 4 (323 aa).

Residues 1-29 lie on the Extracellular side of the membrane; sequence MEVNISMPLNGSEVVFYDSTTSRVLWILS. Asn4 and Asn10 each carry an N-linked (GlcNAc...) asparagine glycan. A helical membrane pass occupies residues 30–50; the sequence is LVVLFITFVLGVLGNGLVIWV. Over 51-66 the chain is Cytoplasmic; it reads AGFQMAHTVTTVSYLN. The helical transmembrane segment at 67–87 threads the bilayer; sequence LALSDLSFMATLPLHIISMVM. The Extracellular segment spans residues 88-99; that stretch reads RGKWLFGWFLCK. An intrachain disulfide couples Cys98 to Cys176. A helical transmembrane segment spans residues 100 to 120; the sequence is LVHIIANINLFVSIFLITLIA. The Cytoplasmic segment spans residues 121-144; it reads MDRCICVLCPVWSQNHRTVSLARK. The chain crosses the membrane as a helical span at residues 145-165; it reads VVLGAWIFALLLTLPHFLFLT. Residues 166-202 are Extracellular-facing; that stretch reads TVRDARGDVYCISKFESWVATSEEQLKVSVIAATASG. A helical membrane pass occupies residues 203–223; it reads IINFIIGFSMPMSFIAICYGL. The Cytoplasmic portion of the chain corresponds to 224–241; that stretch reads MAAKICRRGFVNSSRPLR. Residues 242-262 traverse the membrane as a helical segment; that stretch reads VLTAVAVSFFVCWFPFQLIML. Topologically, residues 263–280 are extracellular; it reads LGNIFNNETLSIIHMLVN. An N-linked (GlcNAc...) asparagine glycan is attached at Asn269. A helical membrane pass occupies residues 281–301; that stretch reads PANTLASFNSCLNPILYVFLG. The Cytoplasmic portion of the chain corresponds to 302–323; the sequence is QEFRDRLIYSLYASLERALRED.

This sequence belongs to the G-protein coupled receptor 1 family. In terms of tissue distribution, expressed in 0.6 % of a subset of sensory neurons located in the apical layer of the vomeronasal organ. Each neuron appears to express only one receptor gene.

The protein localises to the cell membrane. Its function is as follows. May have an olfactory function associated with the identification of pathogens or of pathogenic states. The polypeptide is Formyl peptide receptor-related sequence 4 (Fpr-rs4) (Mus musculus (Mouse)).